A 192-amino-acid polypeptide reads, in one-letter code: Pupal cuticle protein (192 aa).

The signal sequence occupies residues 1-15; it reads MHLLMSLFGVLAVMQ. One can recognise a Chitin-binding type R&amp;R domain in the interval 45 to 106; the sequence is DGNYRYAYET…PVGDHIPKVP (62 aa). The segment covering 149 to 163 has biased composition (polar residues); that stretch reads QDQTTPRSRPSSTPK. The tract at residues 149–192 is disordered; that stretch reads QDQTTPRSRPSSTPKTIYLTHPPTLSDAPTRRPLRQRQNDSRRR.

In terms of biological role, component of the cuticle of the pupa of fruit fly. This chain is Pupal cuticle protein (Pcp), found in Drosophila pseudoobscura pseudoobscura (Fruit fly).